The following is a 474-amino-acid chain: MVQQTNNAENTEALLAGESSDSGAGLELGIASSPTPGSTASTGGKADDPSWCKTPSGHIKRPMNAFMVWSQIERRKIMEQSPDMHNAEISKRLGKRWKLLKDSDKIPFIREAERLRLKHMADYPDYKYRPRKKVKSGNANSSSSAAASSKPGEKGDKVGGSGGGGHGGGGGGGSSNAGGGGGGASGGGANSKPAQKKSCGSKVAGGAGGGVSKPHAKLILAGGGGGGKAAAAAAASFAAEQAGAAALLPLGAAADHHSLYKARTPSASASASSAASASAALAAPGKHLAEKKVKRVYLFGGLGTSSSPVGGVGAGADPSDPLGLYEEEGAGCSPDAPSLSGRSSAASSPAAGRSPADHRGYASLRAASPAPSSAPSHASSSASSHSSSSSSSGSSSSDDEFEDDLLDLNPSSNFESMSLGSFSSSSALDRDLDFNFEPGSGSHFEFPDYCTPEVSEMISGDWLESSISNLVFTY.

Polar residues predominate over residues 1-10 (MVQQTNNAEN). The interval 1 to 58 (MVQQTNNAENTEALLAGESSDSGAGLELGIASSPTPGSTASTGGKADDPSWCKTPSGH) is disordered. The segment covering 31-44 (ASSPTPGSTASTGG) has biased composition (low complexity). The segment at residues 59–127 (IKRPMNAFMV…KHMADYPDYK (69 aa)) is a DNA-binding region (HMG box). At Lys95 the chain carries N6-acetyllysine. Disordered regions lie at residues 128 to 228 (YRPR…GGGK), 262 to 286 (ARTPSASASASSAASASAALAAPGK), and 302 to 416 (LGTS…NFES). Over residues 138–149 (NANSSSSAAASS) the composition is skewed to low complexity. The span at 158-189 (VGGSGGGGHGGGGGGGSSNAGGGGGGASGGGA) shows a compositional bias: gly residues. Composition is skewed to low complexity over residues 266 to 283 (SASASASSAASASAALAA), 304 to 320 (TSSSPVGGVGAGADPSD), 336 to 354 (APSLSGRSSAASSPAAGRS), and 366 to 396 (AASPAPSSAPSHASSSASSHSSSSSSSGSSS). Positions 397 to 406 (SDDEFEDDLL) are enriched in acidic residues. Over residues 407-416 (DLNPSSNFES) the composition is skewed to low complexity. Positions 426-434 (SALDRDLDF) match the 9aaTAD motif.

Interacts with UBE2I. Interacts with HDAC1; interaction inhibits the transcriptional activator activity. In terms of processing, acetylation at Lys-95 by KAT5 promotes the transcription activator activity and is required during myoblast differentiation. Acetylation by KAT5 abolishes the interaction between SOX4 and HDAC1 and switches SOX4 into a transcriptional activator. As to expression, testis, brain, and heart.

The protein resides in the nucleus. In terms of biological role, transcriptional activator that binds with high affinity to the T-cell enhancer motif 5'-AACAAAG-3' motif. Required for IL17A-producing Vgamma2-positive gamma-delta T-cell maturation and development, via binding to regulator loci of RORC to modulate expression. Involved in skeletal myoblast differentiation by promoting gene expression of CALD1. The chain is Transcription factor SOX-4 from Homo sapiens (Human).